Here is a 453-residue protein sequence, read N- to C-terminus: MDIEEVIEEALQKIVPKEEEERFVKTLMSEIEEKARETIEELNLNAKPYFVGSLAKNTYLAGDHDLDLFIAFPLDTSLEKLREKGLEAGKVLGKKLGRYELAYAEHPYVRAEYKGVKVDIVPCYDVKSWKDVRTAVDRSILHTKWVIENLKGKNNEVRLFKRFLKGIKAYGSEIYVRGFSGYLAEILVIEFGSFLSVLEKADFMLKKKIIDTGKWMKKESEITMKTIKREAEEDKPLIVIDPVDPRRNVAANLSWERFGLFYFSSMQFLEKPSLEFFFPGEKRGNYREELKRKGTHLVTLLFTPPKLVDDLLLPQVEKTAKGLAKALEIEGFKVFGIDYGRNFIFLEVDRVEKPRIEIKRGPLYFTSHGRRFYEKNEKVWIEGKDLMAEKKVGGFIVEVLEEIFKKGQFSAGKNVKEVIKSSDILIDFVPKPLANEAYLFLSREKFNVKRSTS.

2 residues coordinate ATP: serine 53 and lysine 56. The CTP site is built by serine 53 and lysine 56. Positions 65, 67, and 119 each coordinate Mg(2+). ATP is bound by residues histidine 142, lysine 161, and tyrosine 170. Residues histidine 142, lysine 161, and tyrosine 170 each contribute to the CTP site.

It belongs to the tRNA nucleotidyltransferase/poly(A) polymerase family. Archaeal CCA-adding enzyme subfamily. Homodimer. Mg(2+) is required as a cofactor.

It catalyses the reaction a tRNA precursor + 2 CTP + ATP = a tRNA with a 3' CCA end + 3 diphosphate. It carries out the reaction a tRNA with a 3' CCA end + 2 CTP + ATP = a tRNA with a 3' CCACCA end + 3 diphosphate. Functionally, catalyzes the addition and repair of the essential 3'-terminal CCA sequence in tRNAs without using a nucleic acid template. Adds these three nucleotides in the order of C, C, and A to the tRNA nucleotide-73, using CTP and ATP as substrates and producing inorganic pyrophosphate. tRNA 3'-terminal CCA addition is required both for tRNA processing and repair. Also involved in tRNA surveillance by mediating tandem CCA addition to generate a CCACCA at the 3' terminus of unstable tRNAs. While stable tRNAs receive only 3'-terminal CCA, unstable tRNAs are marked with CCACCA and rapidly degraded. This Pyrococcus furiosus (strain ATCC 43587 / DSM 3638 / JCM 8422 / Vc1) protein is CCA-adding enzyme.